Consider the following 103-residue polypeptide: Auxin-responsive protein SAUR50 (103 aa).

Belongs to the ARG7 family.

Its function is as follows. Effector of hormonal and environmental signals in plant growth. Involved in heliotropism. In Helianthus annuus (Common sunflower), this protein is Auxin-responsive protein SAUR50.